The chain runs to 152 residues: Small ribosomal subunit protein uS8m (152 aa).

This sequence belongs to the universal ribosomal protein uS8 family. As to quaternary structure, component of the mitochondrial small ribosomal subunit (mt-SSU). Mature yeast 74S mitochondrial ribosomes consist of a small (37S) and a large (54S) subunit. The 37S small subunit contains a 15S ribosomal RNA (15S mt-rRNA) and at least 32 different proteins. The 54S large subunit contains a 21S rRNA (21S mt-rRNA) and at least 45 different proteins.

The protein localises to the mitochondrion. Component of the mitochondrial ribosome (mitoribosome), a dedicated translation machinery responsible for the synthesis of mitochondrial genome-encoded proteins, including at least some of the essential transmembrane subunits of the mitochondrial respiratory chain. The mitoribosomes are attached to the mitochondrial inner membrane and translation products are cotranslationally integrated into the membrane. This is Small ribosomal subunit protein uS8m (mrps8) from Schizosaccharomyces pombe (strain 972 / ATCC 24843) (Fission yeast).